We begin with the raw amino-acid sequence, 139 residues long: Large-conductance mechanosensitive channel (139 aa).

2 consecutive transmembrane segments (helical) span residues 17-37 and 88-108; these read VVDM…VTSL and TVDF…IMAA.

The protein belongs to the MscL family. As to quaternary structure, homopentamer.

Its subcellular location is the cell inner membrane. In terms of biological role, channel that opens in response to stretch forces in the membrane lipid bilayer. May participate in the regulation of osmotic pressure changes within the cell. This Porphyromonas gingivalis (strain ATCC 33277 / DSM 20709 / CIP 103683 / JCM 12257 / NCTC 11834 / 2561) protein is Large-conductance mechanosensitive channel.